The following is a 644-amino-acid chain: Chaperone protein DnaK (644 aa).

T199 is subject to Phosphothreonine; by autocatalysis. The segment covering A550 to R584 has biased composition (basic and acidic residues). Disordered stretches follow at residues A550 to S586 and Y599 to K644. Residues S600–G623 show a composition bias toward low complexity.

Belongs to the heat shock protein 70 family.

Acts as a chaperone. The protein is Chaperone protein DnaK of Leptospira biflexa serovar Patoc (strain Patoc 1 / Ames).